Consider the following 434-residue polypeptide: 3-phosphoshikimate 1-carboxyvinyltransferase (434 aa).

The 3-phosphoshikimate site is built by Lys22, Ser23, and Arg27. Lys22 lines the phosphoenolpyruvate pocket. Residues Gly93 and Arg121 each contribute to the phosphoenolpyruvate site. Residues Ser168, Ser169, Gln170, Ser199, Asp320, and Lys347 each coordinate 3-phosphoshikimate. Gln170 contacts phosphoenolpyruvate. Residue Asp320 is the Proton acceptor of the active site. Phosphoenolpyruvate is bound by residues Arg351, Arg394, and Lys419.

It belongs to the EPSP synthase family. As to quaternary structure, monomer.

It is found in the cytoplasm. It carries out the reaction 3-phosphoshikimate + phosphoenolpyruvate = 5-O-(1-carboxyvinyl)-3-phosphoshikimate + phosphate. It functions in the pathway metabolic intermediate biosynthesis; chorismate biosynthesis; chorismate from D-erythrose 4-phosphate and phosphoenolpyruvate: step 6/7. Catalyzes the transfer of the enolpyruvyl moiety of phosphoenolpyruvate (PEP) to the 5-hydroxyl of shikimate-3-phosphate (S3P) to produce enolpyruvyl shikimate-3-phosphate and inorganic phosphate. This chain is 3-phosphoshikimate 1-carboxyvinyltransferase, found in Burkholderia ambifaria (strain ATCC BAA-244 / DSM 16087 / CCUG 44356 / LMG 19182 / AMMD) (Burkholderia cepacia (strain AMMD)).